The chain runs to 1992 residues: E3 ubiquitin-protein ligase TRIP12 (1992 aa).

A compositionally biased stretch (polar residues) spans 1–10 (MSNRPNNNPG). Residues 1–398 (MSNRPNNNPG…SGESESDDSE (398 aa)) form a disordered region. Ser-2 is modified (N-acetylserine). At Ser-12 the chain carries Phosphoserine. Positions 18-27 (RNTAGAQPQD) are enriched in polar residues. Low complexity predominate over residues 29–43 (SIGGRSCSSSSVVIV). Basic and acidic residues predominate over residues 48 to 70 (DPDRANTSEKQKTGQVPKKDNSR). Phosphoserine is present on residues Ser-77, Ser-85, and Ser-100. Positions 78-88 (PDYNRTNSPSS) are enriched in polar residues. The segment covering 154-164 (SSCIKSASVSE) has biased composition (polar residues). 2 stretches are compositionally biased toward low complexity: residues 175–188 (PTKL…SAKA) and 196–215 (SSSA…ASSA). Lys-181 bears the N6-acetyllysine mark. Over residues 280 to 290 (PGSSKSETSKP) the composition is skewed to polar residues. Residues Ser-310 and Ser-312 each carry the phosphoserine modification. A compositionally biased stretch (low complexity) spans 330-339 (GSCASASRRG). Residues 346 to 358 (GAAEARRQEKMAD) are compositionally biased toward basic and acidic residues. Polar residues predominate over residues 362–371 (NQETVNSSAA). The WWE domain maps to 749-836 (MLKKGNAQNT…DPELAKSFIK (88 aa)). The segment at 938–1044 (SLLTSPPKAC…QSPKSSFLAS (107 aa)) is disordered. Position 942 is a phosphoserine (Ser-942). The segment covering 948 to 960 (TNGSGSLGSTPSV) has biased composition (polar residues). Positions 961–973 (NSGTATAATNASA) are enriched in low complexity. Phosphoserine is present on residues Ser-991 and Ser-997. Residues 1001-1014 (KRKRLPKRGSRRPK) are compositionally biased toward basic residues. Ser-1016 is subject to Phosphoserine. A compositionally biased stretch (basic and acidic residues) spans 1017 to 1026 (PPRDDDKVDN). Positions 1029 to 1040 (KSPTTTQSPKSS) are enriched in low complexity. Residues Ser-1030, Ser-1317, Ser-1322, Ser-1329, and Ser-1376 each carry the phosphoserine modification. Thr-1377 carries the post-translational modification Phosphothreonine. Disordered stretches follow at residues 1407–1434 (SNKD…AKKH) and 1568–1587 (TNPE…PRLD). The residue at position 1425 (Lys-1425) is an N6-acetyllysine. Ser-1427 carries the phosphoserine modification. Positions 1496-1570 (EIIPTSEFIN…AMQRLLDTNP (75 aa)) are K-box. Residues 1885–1992 (PDHGYTHDSR…REGQQSFHLS (108 aa)) enclose the HECT domain. The active-site Glycyl thioester intermediate is Cys-1959.

The protein belongs to the UPL family. K-HECT subfamily. Interacts with MYC; leading to disrupt interaction with isoform p19ARF/ARF of CDKN2A. Interacts with TRADD; leading to disrupt interaction with isoform p19ARF/ARF of CDKN2A. Interacts with SMARCC1; leading to disrupt interaction with SMARCE1.

Its subcellular location is the nucleus. It localises to the nucleoplasm. It catalyses the reaction S-ubiquitinyl-[E2 ubiquitin-conjugating enzyme]-L-cysteine + [acceptor protein]-L-lysine = [E2 ubiquitin-conjugating enzyme]-L-cysteine + N(6)-ubiquitinyl-[acceptor protein]-L-lysine.. It functions in the pathway protein modification; protein ubiquitination. E3 ubiquitin-protein ligase involved in ubiquitin fusion degradation (UFD) pathway and regulation of DNA repair. Part of the ubiquitin fusion degradation (UFD) pathway, a process that mediates ubiquitination of protein at their N-terminus, regardless of the presence of lysine residues in target proteins. Acts as a key regulator of DNA damage response by acting as a suppressor of RNF168, an E3 ubiquitin-protein ligase that promotes accumulation of 'Lys-63'-linked histone H2A and H2AX at DNA damage sites, thereby acting as a guard against excessive spreading of ubiquitinated chromatin at damaged chromosomes. In normal cells, mediates ubiquitination and degradation of isoform p19ARF/ARF of CDKN2A, a lysine-less tumor suppressor required for p53/TP53 activation under oncogenic stress. In cancer cells, however, isoform p19ARF/ARF and TRIP12 are located in different cell compartments, preventing isoform p19ARF/ARF ubiquitination and degradation. Does not mediate ubiquitination of isoform p16-INK4a of CDKN2A. Also catalyzes ubiquitination of NAE1 and SMARCE1, leading to their degradation. Ubiquitination and degradation of target proteins is regulated by interaction with proteins such as MYC, TRADD or SMARCC1, which disrupt the interaction between TRIP12 and target proteins. Mediates ubiquitination of ASXL1: following binding to N(6)-methyladenosine methylated DNA, ASXL1 is ubiquitinated by TRIP12, leading to its degradation and subsequent inactivation of the PR-DUB complex. The chain is E3 ubiquitin-protein ligase TRIP12 (TRIP12) from Bos taurus (Bovine).